Consider the following 74-residue polypeptide: Antimicrobial peptide HsAp2 (74 aa).

The signal sequence occupies residues 1 to 21 (MSRRLILILVLVAMLVKTMAG). Positions 22–33 (MESKWVETTYEI) are excised as a propeptide. Proline amide is present on Pro65. A propeptide spanning residues 69 to 74 (AISEQT) is cleaved from the precursor.

This sequence belongs to the non-disulfide-bridged peptide (NDBP) superfamily. Medium-length antimicrobial peptide (group 3) family. Expressed by the venom gland.

It is found in the secreted. The protein localises to the target cell membrane. Functionally, possesses antimicrobial activity against both Gram-negative and Gram-positive bacteria, as well as against the fungus C.tropicalis. Also possesses a relatively high hemolytic activity. May act by disrupting the integrity of the bacterial cell membrane. The chain is Antimicrobial peptide HsAp2 from Heterometrus spinifer (Asia giant forest scorpion).